Reading from the N-terminus, the 197-residue chain is UPF0319 protein VP0761 (197 aa).

The first 20 residues, 1–20 (MKKTTTLLGICAILSAPAFA), serve as a signal peptide directing secretion.

Belongs to the UPF0319 family.

This chain is UPF0319 protein VP0761, found in Vibrio parahaemolyticus serotype O3:K6 (strain RIMD 2210633).